The following is a 503-amino-acid chain: MEFSVKSGSPEKQRSACIVVGVFEPRRLSPIAEQLDKISDGYISALLRRGELEGKVGQTLLLHHVPNILSERILLIGCGKERELDERQYKQVIQKTINTLNDTGSMEAVCFLTELHVKGRNTYWKVRQAVETAKETLYTFDQLKSNKVEPRRPLRKMVFNVPTRRELTSGERAIQHGLAVSSGIKAAKDLGNMPPNICNAGYLASQARQLADAFSTNITTRVIGEQQMKELGMNAYLAVGAGSRNESLMSVMEYKGNPNPDAKPIVLVGKGLTFDAGGISIKPAEGMDEMKYDMCGAATVYGVMRVVAELNLPLNVIGVLAGCENMPGGSAYRPGDVLTTMSGQTVEVLNTDAEGRLVLCDTLTYVERFDPELVIDVATLTGACVIALGHHITGLMSNHNPLAHELIGASEQAGDRAWRLPMSDEYYEQLDSNFADMANIGGRPGGAITAACFLSRFTRKYSWAHLDIAGTAWRSGKAKGATGRPVALLSQFLLNRAGLNGDD.

Residues Lys270 and Asp275 each contribute to the Mn(2+) site. Lys282 is an active-site residue. Residues Asp293, Asp352, and Glu354 each coordinate Mn(2+). Residue Arg356 is part of the active site.

It belongs to the peptidase M17 family. Requires Mn(2+) as cofactor.

It localises to the cytoplasm. It carries out the reaction Release of an N-terminal amino acid, Xaa-|-Yaa-, in which Xaa is preferably Leu, but may be other amino acids including Pro although not Arg or Lys, and Yaa may be Pro. Amino acid amides and methyl esters are also readily hydrolyzed, but rates on arylamides are exceedingly low.. The catalysed reaction is Release of an N-terminal amino acid, preferentially leucine, but not glutamic or aspartic acids.. Functionally, presumably involved in the processing and regular turnover of intracellular proteins. Catalyzes the removal of unsubstituted N-terminal amino acids from various peptides. The chain is Probable cytosol aminopeptidase from Serratia proteamaculans (strain 568).